The primary structure comprises 142 residues: Hydrogenase maturation factor HypA (142 aa).

Ni(2+) is bound at residue H2. Positions 73, 76, 109, and 112 each coordinate Zn(2+).

This sequence belongs to the HypA/HybF family.

Its function is as follows. Involved in the maturation of [NiFe] hydrogenases. Required for nickel insertion into the metal center of the hydrogenase. The chain is Hydrogenase maturation factor HypA from Methanopyrus kandleri (strain AV19 / DSM 6324 / JCM 9639 / NBRC 100938).